The sequence spans 287 residues: Eukaryotic translation initiation factor 3 subunit G (287 aa).

The tract at residues 163-207 (EEDLESKEKDTKLGPTVPGSGKYVAPGMRGDRPAVTGGAERRSEE) is disordered. Residues 208–286 (NTCRVTNLPE…LVLKVEWTRF (79 aa)) enclose the RRM domain.

It belongs to the eIF-3 subunit G family. In terms of assembly, component of the eukaryotic translation initiation factor 3 (eIF-3) complex.

Its subcellular location is the cytoplasm. RNA-binding component of the eukaryotic translation initiation factor 3 (eIF-3) complex, which is involved in protein synthesis of a specialized repertoire of mRNAs and, together with other initiation factors, stimulates binding of mRNA and methionyl-tRNAi to the 40S ribosome. The eIF-3 complex specifically targets and initiates translation of a subset of mRNAs involved in cell proliferation. This subunit can bind 18S rRNA. The polypeptide is Eukaryotic translation initiation factor 3 subunit G (Brugia malayi (Filarial nematode worm)).